Reading from the N-terminus, the 144-residue chain is MQLNTLSPAQGEKKSRKRVGRGIGSGIGKTCGSGHKGQKSRSGGFNKIGFEGGQMPLQRRLPKVGFSSRISIITSQVTLSEINRLTETYITIDVFKAHNLITKNIKRVKVILSGEITRAVTLTGIKVTKGAKLAIEAVKGSVSD.

The disordered stretch occupies residues M1–E51. Residues R21 to H35 are compositionally biased toward gly residues.

It belongs to the universal ribosomal protein uL15 family. In terms of assembly, part of the 50S ribosomal subunit.

Its function is as follows. Binds to the 23S rRNA. In Vesicomyosocius okutanii subsp. Calyptogena okutanii (strain HA), this protein is Large ribosomal subunit protein uL15.